Consider the following 188-residue polypeptide: Peptidyl-tRNA hydrolase (188 aa).

Y14 serves as a coordination point for tRNA. Catalysis depends on H19, which acts as the Proton acceptor. Positions 64, 66, and 112 each coordinate tRNA.

It belongs to the PTH family. As to quaternary structure, monomer.

It is found in the cytoplasm. It carries out the reaction an N-acyl-L-alpha-aminoacyl-tRNA + H2O = an N-acyl-L-amino acid + a tRNA + H(+). In terms of biological role, hydrolyzes ribosome-free peptidyl-tRNAs (with 1 or more amino acids incorporated), which drop off the ribosome during protein synthesis, or as a result of ribosome stalling. Functionally, catalyzes the release of premature peptidyl moieties from peptidyl-tRNA molecules trapped in stalled 50S ribosomal subunits, and thus maintains levels of free tRNAs and 50S ribosomes. This Clostridium novyi (strain NT) protein is Peptidyl-tRNA hydrolase.